The sequence spans 151 residues: Transcriptional regulator MraZ (151 aa).

2 consecutive SpoVT-AbrB domains span residues 5–51 and 81–124; these read AHEL…PVAE and AEIL…GREQ.

This sequence belongs to the MraZ family. As to quaternary structure, forms oligomers.

It localises to the cytoplasm. It is found in the nucleoid. The polypeptide is Transcriptional regulator MraZ (Neisseria meningitidis serogroup A / serotype 4A (strain DSM 15465 / Z2491)).